The sequence spans 408 residues: G2/mitotic-specific cyclin-B (408 aa).

It belongs to the cyclin family. Cyclin AB subfamily. As to quaternary structure, interacts with the CDC2 protein kinase to form a serine/threonine kinase holoenzyme complex also known as maturation promoting factor (MPF). The cyclin subunit imparts substrate specificity to the complex.

Essential for the control of the cell cycle at the G2/M (mitosis) transition. In Patella vulgata (Common limpet), this protein is G2/mitotic-specific cyclin-B.